We begin with the raw amino-acid sequence, 75 residues long: Small ribosomal subunit protein bS18 (75 aa).

The protein belongs to the bacterial ribosomal protein bS18 family. As to quaternary structure, part of the 30S ribosomal subunit. Forms a tight heterodimer with protein bS6.

Binds as a heterodimer with protein bS6 to the central domain of the 16S rRNA, where it helps stabilize the platform of the 30S subunit. The protein is Small ribosomal subunit protein bS18 of Thermosipho melanesiensis (strain DSM 12029 / CIP 104789 / BI429).